Reading from the N-terminus, the 126-residue chain is Heterotrimeric G protein gamma subunit GPG1 (126 aa).

As to quaternary structure, g proteins are composed of 3 units, alpha, beta and gamma. GPG1 interacts with the beta subunits GBP1 and GPB2.

It is found in the cytoplasm. Gamma subunit of a guanine nucleotide-binding protein (G protein). G proteins are involved as modulators or transducers in various transmembrane signaling systems. The beta and gamma chains are required for the GTPase activity, for replacement of GDP by GTP, and for G protein-effector interaction. Involved in the determination of the cAMP level according to nutritional conditions, most probably as a regulator of cAMP phosphodiesterase. Required for the control of pseudohyphal and haploid invasive growth. This is Heterotrimeric G protein gamma subunit GPG1 (GPG1) from Saccharomyces cerevisiae (strain ATCC 204508 / S288c) (Baker's yeast).